A 548-amino-acid chain; its full sequence is Hydroxylamine reductase (548 aa).

[4Fe-4S] cluster contacts are provided by cysteine 3, cysteine 6, cysteine 15, and cysteine 21. Histidine 240, glutamate 264, cysteine 308, cysteine 402, cysteine 430, cysteine 455, glutamate 490, and lysine 492 together coordinate hybrid [4Fe-2O-2S] cluster. Cysteine 402 is modified (cysteine persulfide).

This sequence belongs to the HCP family. The cofactor is [4Fe-4S] cluster. Requires hybrid [4Fe-2O-2S] cluster as cofactor.

It localises to the cytoplasm. It carries out the reaction A + NH4(+) + H2O = hydroxylamine + AH2 + H(+). In terms of biological role, catalyzes the reduction of hydroxylamine to form NH(3) and H(2)O. This chain is Hydroxylamine reductase, found in Parabacteroides distasonis (strain ATCC 8503 / DSM 20701 / CIP 104284 / JCM 5825 / NCTC 11152).